The chain runs to 513 residues: Sphingosine-1-phosphate transporter SPNS2 (513 aa).

Transmembrane regions (helical) follow at residues 102–122, 130–150, 163–183, 190–210, 222–242, 276–296, 320–340, 354–374, 378–398, 422–442, and 463–483; these read GLLQ…FGYL, VILS…SFIP, LVGI…GDLF, LMLS…YITG, WALR…LIFV, LATS…PLYL, LIFG…GAGA, LVCA…FVAA, IIAA…NWAI, TSHL…SDLI, and LCPF…LFFL.

Belongs to the major facilitator superfamily. Spinster (TC 2.A.1.49) family.

The protein localises to the cell membrane. It localises to the endosome membrane. The enzyme catalyses sphing-4-enine 1-phosphate(in) = sphing-4-enine 1-phosphate(out). It catalyses the reaction sphinganine 1-phosphate(in) = sphinganine 1-phosphate(out). Lipid transporter that specifically mediates export of sphingosine-1-phosphate (sphing-4-enine 1-phosphate, S1P) and sphinganine-1-phosphate. The protein is Sphingosine-1-phosphate transporter SPNS2 (spns2) of Xenopus tropicalis (Western clawed frog).